We begin with the raw amino-acid sequence, 259 residues long: Acyl-[acyl-carrier-protein]--UDP-N-acetylglucosamine O-acyltransferase (259 aa).

The protein belongs to the transferase hexapeptide repeat family. LpxA subfamily. As to quaternary structure, homotrimer.

The protein resides in the cytoplasm. It carries out the reaction a (3R)-hydroxyacyl-[ACP] + UDP-N-acetyl-alpha-D-glucosamine = a UDP-3-O-[(3R)-3-hydroxyacyl]-N-acetyl-alpha-D-glucosamine + holo-[ACP]. The protein operates within glycolipid biosynthesis; lipid IV(A) biosynthesis; lipid IV(A) from (3R)-3-hydroxytetradecanoyl-[acyl-carrier-protein] and UDP-N-acetyl-alpha-D-glucosamine: step 1/6. In terms of biological role, involved in the biosynthesis of lipid A, a phosphorylated glycolipid that anchors the lipopolysaccharide to the outer membrane of the cell. The protein is Acyl-[acyl-carrier-protein]--UDP-N-acetylglucosamine O-acyltransferase of Psychrobacter arcticus (strain DSM 17307 / VKM B-2377 / 273-4).